A 166-amino-acid chain; its full sequence is MKIYRVESSFSILNYEDAITIRRDLCVQITPYRSIIDSWSEEWLLHVGYDRPNFMHHSNDNKRIPVPHEDKLLVKNANIVINTKFKKDYVGVEYHIPGWFVALYHFAFASEYDMMKWFTREEREELASKGFYLAVYEVPDDQVIIGGHQVMFRKSYAELKGFITLN.

This is an uncharacterized protein from Enterobacteria phage T4 (Bacteriophage T4).